We begin with the raw amino-acid sequence, 1183 residues long: RecQ-like DNA helicase BLM (1183 aa).

The interval 1-109 (MEEARAATNG…AAEQDSSAEH (109 aa)) is disordered. Residues 14-27 (ESQKLSNGEKSSQL) show a composition bias toward polar residues. A compositionally biased stretch (acidic residues) spans 38 to 48 (ADIELEEDDYL). The segment at 110–162 (ADKGLHLEQQLYSVMEDICKLVDAIPLHELTSISCAKELLQQRELRRKLLADS) is necessary for dimerization and homooligomerization. Disordered regions lie at residues 164-215 (ALNT…LPSV), 260-323 (PKVN…GCWD), and 381-408 (GSAP…PLVH). 2 stretches are compositionally biased toward polar residues: residues 206–215 (TPKSTNLPSV) and 265–280 (KGST…SFNG). Residues 439-443 (FRTNQ) and 463-467 (GGGKS) contribute to the ATP site. Residues 447–622 (INAALLGEDC…QNQLEMLKPQ (176 aa)) form the Helicase ATP-binding domain. The short motif at 566-569 (DEAH) is the DEAH box element. 2 3' overhang DNA-binding regions span residues 641–644 (KPKK) and 668–670 (SRH). The Helicase C-terminal domain maps to 648-795 (DCLEWIKKYH…TRQTHFNNLY (148 aa)). An ATP-binding site is contributed by Arg753. A 3' overhang DNA-binding region spans residues 771–774 (RLRR). Residues Cys807, Cys826, Cys834, and Cys837 each contribute to the Zn(2+) site. Residues 865-910 (QVGGINGNRNTGSGRYTLNMMVDIFLGAKSAKIQSGIFGKGAAYSR) are DNA Holliday junction binding. 3' overhang DNA-binding regions lie at residues 881–883 (TLN), 892–896 (AKSAK), and 931–937 (YITANDQ). The 81-residue stretch at 983–1063 (EEMVKKCLGE…DKYSEWTTPE (81 aa)) folds into the HRDC domain. Residues 998-1015 (KTLGKIFDVHYFNIFSTS) are necessary for ssDNA and DNA Holliday junction binding. Positions 1068–1183 (QSVDTAPGSA…HFLQPSYAVL (116 aa)) are disordered. Positions 1091 to 1101 (VTSSYFGGNAN) are enriched in polar residues. The Nuclear localization signal motif lies at 1104–1120 (RKRKRLPNSGESKRKKT). The segment covering 1133–1142 (ARYRRARRAP) has biased composition (basic residues). Positions 1143 to 1158 (GSRAAAPAQSSALRGA) are enriched in low complexity.

This sequence belongs to the helicase family. RecQ subfamily. In terms of assembly, monomer. Homodimer (via N-terminus). Homotetramer (via N-terminus); dimer of dimers. Homohexamer (via N-terminus). Self-association negatively regulates DNA unwinding amplitude and rate. Oligomer complexes dissociate into monomer in presence of ATP. Zn(2+) serves as cofactor.

The protein resides in the nucleus. It carries out the reaction Couples ATP hydrolysis with the unwinding of duplex DNA by translocating in the 3'-5' direction.. The catalysed reaction is ATP + H2O = ADP + phosphate + H(+). Functionally, ATP-dependent DNA helicase that unwinds single- and double-stranded DNA in a 3'-5' direction. Participates in DNA replication and repair. Involved in 5'-end resection of DNA during double-strand break (DSB) repair. Negatively regulates sister chromatid exchange (SCE). Stimulates DNA 4-way junction branch migration and DNA Holliday junction dissolution. Binds DNA. Binds single-stranded DNA (ssDNA), forked duplex DNA and DNA Holliday junction. In Gallus gallus (Chicken), this protein is RecQ-like DNA helicase BLM (BLM).